The chain runs to 312 residues: Malate dehydrogenase (312 aa).

NAD(+) contacts are provided by residues G7–G13 and D34. Residues R81 and R87 each contribute to the substrate site. NAD(+)-binding positions include N94 and I117–N119. Substrate is bound by residues N119 and R153. Residue H177 is the Proton acceptor of the active site. Position 227 (M227) interacts with NAD(+).

This sequence belongs to the LDH/MDH superfamily. MDH type 1 family. Homodimer.

The enzyme catalyses (S)-malate + NAD(+) = oxaloacetate + NADH + H(+). In terms of biological role, catalyzes the reversible oxidation of malate to oxaloacetate. This Escherichia coli O17:K52:H18 (strain UMN026 / ExPEC) protein is Malate dehydrogenase.